The sequence spans 445 residues: Ribosomal protein uS12 methylthiotransferase RimO (445 aa).

The MTTase N-terminal domain maps to 13 to 123; that stretch reads PRVGFVSLGC…VMAAIHHHLP (111 aa). Residues Cys-22, Cys-58, Cys-87, Cys-154, Cys-158, and Cys-161 each contribute to the [4Fe-4S] cluster site. The region spanning 140-377 is the Radical SAM core domain; that stretch reads LTPKHYAYLK…MQQQEIISKQ (238 aa). In terms of domain architecture, TRAM spans 380–445; it reads AVKKGQQLRV…DIHDLWTEKI (66 aa).

It belongs to the methylthiotransferase family. RimO subfamily. [4Fe-4S] cluster is required as a cofactor.

Its subcellular location is the cytoplasm. The enzyme catalyses L-aspartate(89)-[ribosomal protein uS12]-hydrogen + (sulfur carrier)-SH + AH2 + 2 S-adenosyl-L-methionine = 3-methylsulfanyl-L-aspartate(89)-[ribosomal protein uS12]-hydrogen + (sulfur carrier)-H + 5'-deoxyadenosine + L-methionine + A + S-adenosyl-L-homocysteine + 2 H(+). Catalyzes the methylthiolation of an aspartic acid residue of ribosomal protein uS12. This Nitrosomonas eutropha (strain DSM 101675 / C91 / Nm57) protein is Ribosomal protein uS12 methylthiotransferase RimO.